The sequence spans 271 residues: Repressed by EFG1 protein 1 (271 aa).

Positions 1 to 19 (MKITNTLLNAAALLAVTEA) are cleaved as a signal peptide. Residues 59-118 (QLTSKTQDSTSPTTSSVNSLTSSSATSYVETTTPAPSSSTLTTSTISSSTASEDSDATPT) are disordered. Over residues 67–118 (STSPTTSSVNSLTSSSATSYVETTTPAPSSSTLTTSTISSSTASEDSDATPT) the composition is skewed to low complexity. The region spanning 128 to 244 (LKEHNVKRAL…AWRQITVCEY (117 aa)) is the SCP domain. A glycan (N-linked (GlcNAc...) asparagine) is linked at Asn254.

Belongs to the CRISP family.

It is found in the secreted. Its subcellular location is the cell wall. Functionally, cell wall protein involved in cell wall integrity and which plays a role in virulence. The polypeptide is Repressed by EFG1 protein 1 (RBE1) (Candida albicans (strain SC5314 / ATCC MYA-2876) (Yeast)).